We begin with the raw amino-acid sequence, 257 residues long: E3 ubiquitin-protein ligase RNF170 (257 aa).

At 1 to 24 (MADNQEGRPYFPLDEGSIIEGVSD) the chain is on the lumenal side. A helical membrane pass occupies residues 25 to 45 (QVIVVVLLSFVAVGSLLYLLL). Topologically, residues 46–200 (RNDEQNIHPE…GGLFWMFRIR (155 aa)) are cytoplasmic. Residues 87-130 (CPVCLQQATFPVETNCGHLFCGSCIIAYWRYGSWLGAINCPICR) form an RING-type zinc finger. A helical membrane pass occupies residues 201–221 (IVLCLLGALFYLVSPLDIIPE). A topological domain (lumenal) is located at residue A222. Residues 223–243 (VFGLLGFLDDFFVLFLLLIYI) traverse the membrane as a helical segment. Over 244–257 (SIMYREVVTQRLYR) the chain is Cytoplasmic.

It is found in the endoplasmic reticulum membrane. It catalyses the reaction S-ubiquitinyl-[E2 ubiquitin-conjugating enzyme]-L-cysteine + [acceptor protein]-L-lysine = [E2 ubiquitin-conjugating enzyme]-L-cysteine + N(6)-ubiquitinyl-[acceptor protein]-L-lysine.. The protein operates within protein modification; protein ubiquitination. Functionally, E3 ubiquitin-protein ligase that plays an essential role in stimulus-induced inositol 1,4,5-trisphosphate receptor (ITPR) ubiquitination and degradation via the endoplasmic reticulum-associated degradation (ERAD) pathway. Also involved in ITPR turnover in resting cells. The protein is E3 ubiquitin-protein ligase RNF170 (rnf170) of Xenopus tropicalis (Western clawed frog).